A 720-amino-acid chain; its full sequence is NADH-ubiquinone oxidoreductase 78 kDa subunit, mitochondrial (720 aa).

Residues 1–23 (MNSIKSHILRSSKRYISASSKRL) constitute a mitochondrion transit peptide. The region spanning 24 to 102 (AEVEVTVDGR…GMVVHTDSER (79 aa)) is the 2Fe-2S ferredoxin-type domain. Residues Cys-58, Cys-69, Cys-72, and Cys-86 each coordinate [2Fe-2S] cluster. The 4Fe-4S His(Cys)3-ligated-type domain occupies 102-141 (RIKKAREGVTEMLLENHPLDCPVCDQGGECDLQEQSQRYG). One can recognise a 4Fe-4S Mo/W bis-MGD-type domain in the interval 241–297 (LKRTETIDVLDAVGSNIRVDTRGIEVMRVLPRLNDDVNEEWISDKTRFACDGLKTQR).

It belongs to the complex I 75 kDa subunit family. Core subunit of respiratory chain NADH dehydrogenase (Complex I) which is composed of 45 different subunits. This is the largest subunit of complex I and it is a component of the iron-sulfur (IP) fragment of the enzyme. The cofactor is [2Fe-2S] cluster. [4Fe-4S] cluster is required as a cofactor.

The protein resides in the mitochondrion. The enzyme catalyses a ubiquinone + NADH + 5 H(+)(in) = a ubiquinol + NAD(+) + 4 H(+)(out). Core subunit of the mitochondrial membrane respiratory chain NADH dehydrogenase (Complex I) which catalyzes electron transfer from NADH through the respiratory chain, using ubiquinone as an electron acceptor. Essential for catalysing the entry and efficient transfer of electrons within complex I. Plays a key role in the assembly and stability of complex I and participates in the association of complex I with ubiquinol-cytochrome reductase complex (Complex III) to form supercomplexes. Plays a role in cell wall integrity and is involved in osmotic and oxidative resistance, yeast to hypha transition, and the ability to damage and invade oral epithelial cells. The chain is NADH-ubiquinone oxidoreductase 78 kDa subunit, mitochondrial from Candida albicans (strain SC5314 / ATCC MYA-2876) (Yeast).